A 192-amino-acid polypeptide reads, in one-letter code: ADP-ribosylation factor-like protein 14 (192 aa).

Gly2 is lipidated: N-myristoyl glycine. GTP-binding positions include 20-27 (GLDSAGKS), 64-68 (DVGGQ), and 124-127 (NKQD).

It belongs to the small GTPase superfamily. Arf family. Interacts with ARL14EP.

It localises to the cytoplasmic vesicle. In terms of biological role, GTPase that recruits MYO1E to MHC class II-containing vesicles via the effector protein ARL14EP and hence controls the movement of these vesicles along the actin cytoskeleton in dendritic cells. This is ADP-ribosylation factor-like protein 14 (Arl14) from Mus musculus (Mouse).